Consider the following 360-residue polypeptide: Geranylgeranyl pyrophosphate synthase 12, chloroplastic (360 aa).

The transit peptide at 1 to 39 directs the protein to the chloroplast; the sequence is MANTVHLSSSSLFIQTRGRKYNSILSFNNLQKRTVLSLS. Positions 106, 109, and 138 each coordinate isopentenyl diphosphate. 2 residues coordinate Mg(2+): Asp145 and Asp151. Arg156 lines the dimethylallyl diphosphate pocket. Arg157 provides a ligand contact to isopentenyl diphosphate. Positions 245, 246, 283, 300, and 310 each coordinate dimethylallyl diphosphate.

It belongs to the FPP/GGPP synthase family. Monomer. Mg(2+) is required as a cofactor.

The protein resides in the plastid. It is found in the chloroplast. The enzyme catalyses isopentenyl diphosphate + dimethylallyl diphosphate = (2E)-geranyl diphosphate + diphosphate. The catalysed reaction is isopentenyl diphosphate + (2E)-geranyl diphosphate = (2E,6E)-farnesyl diphosphate + diphosphate. It catalyses the reaction isopentenyl diphosphate + (2E,6E)-farnesyl diphosphate = (2E,6E,10E)-geranylgeranyl diphosphate + diphosphate. Its pathway is isoprenoid biosynthesis; farnesyl diphosphate biosynthesis; farnesyl diphosphate from geranyl diphosphate and isopentenyl diphosphate: step 1/1. It functions in the pathway isoprenoid biosynthesis; geranyl diphosphate biosynthesis; geranyl diphosphate from dimethylallyl diphosphate and isopentenyl diphosphate: step 1/1. It participates in isoprenoid biosynthesis; geranylgeranyl diphosphate biosynthesis; geranylgeranyl diphosphate from farnesyl diphosphate and isopentenyl diphosphate: step 1/1. In terms of biological role, catalyzes the trans-addition of the three molecules of IPP onto DMAPP to form geranylgeranyl pyrophosphate. This chain is Geranylgeranyl pyrophosphate synthase 12, chloroplastic, found in Arabidopsis thaliana (Mouse-ear cress).